A 690-amino-acid polypeptide reads, in one-letter code: Putative glycerophosphocholine phosphodiesterase GPCPD1 homolog 1 (690 aa).

The 122-residue stretch at 1–122 (MDQDYKAHFK…RKNITDQFGS (122 aa)) folds into the CBM20 domain. The 311-residue stretch at 344-654 (MLQIGHRGMG…DRIGEDEVLK (311 aa)) folds into the GP-PDE domain. The tract at residues 670 to 690 (ARSQHNSRSPSMSRRCMSTVE) is disordered. The segment covering 676 to 690 (SRSPSMSRRCMSTVE) has biased composition (low complexity).

It belongs to the glycerophosphoryl diester phosphodiesterase family.

This chain is Putative glycerophosphocholine phosphodiesterase GPCPD1 homolog 1, found in Caenorhabditis elegans.